Consider the following 469-residue polypeptide: Glutamate--tRNA ligase 1 (469 aa).

The short motif at 8-18 (PSPTGYLHIGG) is the 'HIGH' region element. Positions 117-137 (TPRYDGTWRPEPGKELPPVPA) are disordered. The short motif at 240-244 (KLSKR) is the 'KMSKS' region element. Lysine 243 provides a ligand contact to ATP.

It belongs to the class-I aminoacyl-tRNA synthetase family. Glutamate--tRNA ligase type 1 subfamily. Monomer.

The protein resides in the cytoplasm. The catalysed reaction is tRNA(Glu) + L-glutamate + ATP = L-glutamyl-tRNA(Glu) + AMP + diphosphate. In terms of biological role, catalyzes the attachment of glutamate to tRNA(Glu) in a two-step reaction: glutamate is first activated by ATP to form Glu-AMP and then transferred to the acceptor end of tRNA(Glu). This is Glutamate--tRNA ligase 1 from Aliarcobacter butzleri (strain RM4018) (Arcobacter butzleri).